Consider the following 353-residue polypeptide: Farnesyl pyrophosphate synthase (353 aa).

Isopentenyl diphosphate contacts are provided by Lys57, Arg60, and Gln96. Lys57 carries the post-translational modification N6-(2-hydroxyisobutyryl)lysine; alternate. Lys57 bears the N6-acetyllysine; alternate mark. Asp103 and Asp107 together coordinate Mg(2+). Arg112 is a binding site for dimethylallyl diphosphate. Position 113 (Arg113) interacts with isopentenyl diphosphate. Positions 200, 201, 240, 257, and 266 each coordinate dimethylallyl diphosphate.

Belongs to the FPP/GGPP synthase family. Homodimer. Interacts with RSAD2. It depends on Mg(2+) as a cofactor. In terms of tissue distribution, testis, liver, kidney, brain and adrenal gland.

The protein resides in the cytoplasm. The catalysed reaction is isopentenyl diphosphate + dimethylallyl diphosphate = (2E)-geranyl diphosphate + diphosphate. It carries out the reaction isopentenyl diphosphate + (2E)-geranyl diphosphate = (2E,6E)-farnesyl diphosphate + diphosphate. Its pathway is isoprenoid biosynthesis; farnesyl diphosphate biosynthesis; farnesyl diphosphate from geranyl diphosphate and isopentenyl diphosphate: step 1/1. It functions in the pathway isoprenoid biosynthesis; geranyl diphosphate biosynthesis; geranyl diphosphate from dimethylallyl diphosphate and isopentenyl diphosphate: step 1/1. With respect to regulation, inactivated by interferon-induced RSAD2. This inactivation may result of disruption of lipid rafts at the plasma membrane, and thus have an antiviral effect since many enveloped viruses need lipid rafts to bud efficiently out of the cell. Functionally, key enzyme in isoprenoid biosynthesis which catalyzes the formation of farnesyl diphosphate (FPP), a precursor for several classes of essential metabolites including sterols, dolichols, carotenoids, and ubiquinones. FPP also serves as substrate for protein farnesylation and geranylgeranylation. Catalyzes the sequential condensation of isopentenyl pyrophosphate with the allylic pyrophosphates, dimethylallyl pyrophosphate, and then with the resultant geranylpyrophosphate to the ultimate product farnesyl pyrophosphate. This Rattus norvegicus (Rat) protein is Farnesyl pyrophosphate synthase (Fdps).